The chain runs to 360 residues: Peptide chain release factor 1 (360 aa).

Gln-235 carries the post-translational modification N5-methylglutamine. The disordered stretch occupies residues 285–313 (KRQQAEASTRRNLLGSGDRSDRNRTYNFP).

The protein belongs to the prokaryotic/mitochondrial release factor family. In terms of processing, methylated by PrmC. Methylation increases the termination efficiency of RF1.

It localises to the cytoplasm. Its function is as follows. Peptide chain release factor 1 directs the termination of translation in response to the peptide chain termination codons UAG and UAA. The sequence is that of Peptide chain release factor 1 from Enterobacter sp. (strain 638).